Reading from the N-terminus, the 152-residue chain is Small ribosomal subunit protein uS15 (152 aa).

The span at 1–10 shows a compositional bias: basic residues; the sequence is MARMYARRRG. The tract at residues 1-24 is disordered; sequence MARMYARRRGTSSSVRPYRKEAPE.

It belongs to the universal ribosomal protein uS15 family. Part of the 30S ribosomal subunit.

The chain is Small ribosomal subunit protein uS15 from Methanoculleus marisnigri (strain ATCC 35101 / DSM 1498 / JR1).